A 223-amino-acid chain; its full sequence is Cytotoxic T-lymphocyte protein 4 (223 aa).

An N-terminal signal peptide occupies residues 1–35 (MACLGLRRYKAQLQLPSRTWPFVALLTLLFIPVFS). One can recognise an Ig-like V-type domain in the interval 36–145 (EAIQVTQPSV…PPPYFVGMGN (110 aa)). Residues 36–161 (EAIQVTQPSV…IDPEPCPDSD (126 aa)) lie on the Extracellular side of the membrane. The homodimerization stretch occupies residues 46 to 50 (VLASS). 2 cysteine pairs are disulfide-bonded: cysteine 58–cysteine 129 and cysteine 85–cysteine 103. 2 N-linked (GlcNAc...) asparagine glycosylation sites follow: asparagine 108 and asparagine 113. The tract at residues 134–139 (MYPPPY) is important for interaction with CD80 and CD86. N-linked (GlcNAc...) asparagine glycosylation is present at asparagine 145. Residues 150–155 (YVIDPE) form a homodimerization region. A helical transmembrane segment spans residues 162–182 (FLLWILVAVSLGLFFYSFLVS). Topologically, residues 183-223 (AVSLSKMLKKRSPLTTGVYVKMPPTEPECEKQFQPYFIPIN) are cytoplasmic. Tyrosine 201 carries the post-translational modification Phosphotyrosine; by TXK and JAK2.

In terms of assembly, homodimer; disulfide-linked. Binds to CD80/B7-1 and CD86/B7.2. Interacts with ICOSLG. Post-translationally, N-glycosylation is important for dimerization. Phosphorylation at Tyr-201 prevents binding to the AP-2 adapter complex, blocks endocytosis, and leads to retention of CTLA4 on the cell surface. In terms of tissue distribution, widely expressed with highest levels in lymphoid tissues.

The protein localises to the cell membrane. In terms of biological role, inhibitory receptor acting as a major negative regulator of T-cell responses. The affinity of CTLA4 for its natural B7 family ligands, CD80 and CD86, is considerably stronger than the affinity of their cognate stimulatory coreceptor CD28. This chain is Cytotoxic T-lymphocyte protein 4 (Ctla4), found in Mus musculus (Mouse).